An 89-amino-acid polypeptide reads, in one-letter code: uncharacterized protein (89 aa).

An HTH arsR-type domain is found at 1–89 (MEKYEKAAEI…KEIIKLVDEL (89 aa)).

This is an uncharacterized protein from Methanocaldococcus jannaschii (strain ATCC 43067 / DSM 2661 / JAL-1 / JCM 10045 / NBRC 100440) (Methanococcus jannaschii).